The following is a 473-amino-acid chain: Protein AUXIN RESPONSE 4 (473 aa).

Acidic residues predominate over residues 1 to 10; the sequence is MAIITEEEED. The tract at residues 1-38 is disordered; that stretch reads MAIITEEEEDPKTLNPPKNKPKDSDFTKSESTMKNPKP. Residues 29 to 38 are compositionally biased toward polar residues; the sequence is SESTMKNPKP. Residues 44–64 traverse the membrane as a helical segment; that stretch reads FPFWFYFTVVVSLATIIFISL. Residues 119 to 283 enclose the AB hydrolase-1 domain; it reads TVVIVHGLGL…DSSISPALPL (165 aa).

Most abundant in root tissue, lesser amounts in rosette leaves, stems and flowers and very little in mature siliques.

The protein resides in the endoplasmic reticulum membrane. Functionally, required for the auxin influx facilitator AUX1 polar trafficking and its asymmetric localization within the plasma membrane. Not involved in the PIN proteins localization. This chain is Protein AUXIN RESPONSE 4 (AXR4), found in Arabidopsis thaliana (Mouse-ear cress).